Reading from the N-terminus, the 273-residue chain is Major prion protein homolog (273 aa).

Residues 1–24 (MARLLTTCCLLALLLAACTDVALS) form the signal peptide. The tract at residues 25–121 (KKGKGKPSGG…QKPWKPPKTN (97 aa)) is disordered. A run of 8 repeats spans residues 42-47 (RQPSYP), 48-53 (RQPGYP), 54-59 (HNPGYP), 60-65 (HNPGYP), 66-71 (HNPGYP), 72-77 (HNPGYP), 78-83 (HNPGYP), and 84-89 (QNPGYP). Positions 42–89 (RQPSYPRQPGYPHNPGYPHNPGYPHNPGYPHNPGYPHNPGYPQNPGYP) are 8 X 6 AA tandem repeats of [HR]-[NQ]-P-G-Y-P. The span at 51–94 (GYPHNPGYPHNPGYPHNPGYPHNPGYPHNPGYPQNPGYPHNPGY) shows a compositional bias: low complexity. Residues H66, H72, and H78 each coordinate Cu(2+). Cu(2+)-binding residues include H90 and G93. Over residues 101-111 (YNPSSGGSYHN) the composition is skewed to polar residues. A disulfide bridge connects residues C192 and C237. N194, N209, and N218 each carry an N-linked (GlcNAc...) asparagine glycan. The GPI-anchor amidated serine moiety is linked to residue S248. The propeptide at 249–273 (GIQLHPADTWLAVLLLLLTTLFAMH) is removed in mature form.

It belongs to the prion family. As to quaternary structure, monomer and homodimer. Has a tendency to aggregate into amyloid fibrils containing a cross-beta spine, formed by a steric zipper of superposed beta-strands. Soluble oligomers may represent an intermediate stage on the path to fibril formation. Copper binding may promote oligomerization. Spinal cord and brain.

The protein localises to the cell membrane. Its function is as follows. Its primary physiological function is unclear. Has cytoprotective activity against internal or environmental stresses. May play a role in neuronal development and synaptic plasticity. May be required for neuronal myelin sheath maintenance. May play a role in iron uptake and iron homeostasis. Soluble oligomers are toxic to cultured neuroblastoma cells and induce apoptosis (in vitro). Association with GPC1 (via its heparan sulfate chains) targets PRNP to lipid rafts. Also provides Cu(2+) or Zn(2+) for the ascorbate-mediated GPC1 deaminase degradation of its heparan sulfate side chains. The sequence is that of Major prion protein homolog (PRNP) from Gallus gallus (Chicken).